The following is a 466-amino-acid chain: Paraneoplastic antigen Ma3 homolog (466 aa).

The interval 379 to 408 (RPYQGSRRRRHRRRGQHRKGGVPRDDSQGT) is disordered. Residues 384–399 (SRRRRHRRRGQHRKGG) show a composition bias toward basic residues. Residues 415–432 (TFCYSCGEDGHIRVHCFN) form a CCHC-type zinc finger. The disordered stretch occupies residues 441-466 (QKRQAAMEKGNRSWAWEKSHPKPKTK). A compositionally biased stretch (basic and acidic residues) spans 445–460 (AAMEKGNRSWAWEKSH).

It belongs to the PNMA family. In terms of tissue distribution, expressed in the cerebrum and cerebellum.

The protein resides in the nucleus. It localises to the nucleolus. The polypeptide is Paraneoplastic antigen Ma3 homolog (Pnma3) (Mus musculus (Mouse)).